Here is a 156-residue protein sequence, read N- to C-terminus: Small ribosomal subunit protein uS7 (156 aa).

The protein belongs to the universal ribosomal protein uS7 family. Part of the 30S ribosomal subunit. Contacts proteins S9 and S11.

In terms of biological role, one of the primary rRNA binding proteins, it binds directly to 16S rRNA where it nucleates assembly of the head domain of the 30S subunit. Is located at the subunit interface close to the decoding center, probably blocks exit of the E-site tRNA. The polypeptide is Small ribosomal subunit protein uS7 (Nitratidesulfovibrio vulgaris (strain DSM 19637 / Miyazaki F) (Desulfovibrio vulgaris)).